A 138-amino-acid chain; its full sequence is Large ribosomal subunit protein uL16 (138 aa).

This sequence belongs to the universal ribosomal protein uL16 family. Part of the 50S ribosomal subunit.

In terms of biological role, binds 23S rRNA and is also seen to make contacts with the A and possibly P site tRNAs. In Anaeromyxobacter dehalogenans (strain 2CP-1 / ATCC BAA-258), this protein is Large ribosomal subunit protein uL16.